The sequence spans 418 residues: Putative ion-transport protein YfeO (418 aa).

12 helical membrane passes run 10 to 30 (LLLSLPAVAIGIASSLILIVV), 54 to 74 (DSPLWIIGVLTLTGIAVGLVI), 99 to 119 (ALPGLIVALILGLAGGVSLGP), 120 to 140 (EHPIMTVNIALAVAIGARLLP), 149 to 169 (ILASAGTIGALFGTPVAAALI), 186 to 206 (LFAPLMAAAAGALTTGLFFHP), 223 to 243 (ILSGAIVAAIAIAAGMVAVWC), 258 to 278 (VLVLGIGGFILGILGVIGGPV), 300 to 320 (DYFLLAVIKLAALVVAAASGF), 322 to 342 (GGRIFPAVFVGVALGLMLHEH), 343 to 363 (VPAVPAAITVSCAILGIVLVV), and 371 to 391 (LFMAAVVVPNTTLLPLLCIVM).

It belongs to the chloride channel (TC 2.A.49) family.

The protein resides in the cell membrane. This chain is Putative ion-transport protein YfeO, found in Escherichia coli (strain 55989 / EAEC).